The following is a 222-amino-acid chain: MIF4G domain-containing protein (222 aa).

In terms of domain architecture, MIF4G spans 3 to 205 (EPSREEYKIQ…LEIIEFRAAG (203 aa)).

This sequence belongs to the MIF4GD family. Interacts with EIF4G1, EIF4G2 and SLBP; probably tethered by SLBP to the 3'-end of mRNAs ending with the histone stem-loop, it also interacts with EIF4G1 which is bound to their 5'-end.

The protein resides in the cytoplasm. Its subcellular location is the nucleus. In terms of biological role, functions in replication-dependent translation of histone mRNAs which differ from other eukaryotic mRNAs in that they do not end with a poly-A tail but a stem-loop. May participate in circularizing those mRNAs specifically enhancing their translation. The polypeptide is MIF4G domain-containing protein (MIF4GD) (Homo sapiens (Human)).